The sequence spans 47 residues: Exoenzymes regulatory protein AepH (47 aa).

Composition is skewed to basic and acidic residues over residues 1–17 (MGQE…QDGH) and 33–47 (TKKE…DANV). Residues 1–47 (MGQEPKGIESRKIQDGHVRKKVGRQQGLWVRTTKKEKFSRMSRDANV) are disordered.

Its function is as follows. Involved in the control of extracellular enzymes production. Stimulates PEL, PEH, CEL, and PRT production. The protein is Exoenzymes regulatory protein AepH (aepH) of Pectobacterium carotovorum subsp. carotovorum (Erwinia carotovora subsp. carotovora).